The following is a 126-amino-acid chain: Fluoride-specific ion channel FluC (126 aa).

4 consecutive transmembrane segments (helical) span residues S4–L24, G36–A56, L68–V88, and A99–A119. Na(+)-binding residues include G75 and T78.

It belongs to the fluoride channel Fluc/FEX (TC 1.A.43) family.

The protein localises to the cell inner membrane. The catalysed reaction is fluoride(in) = fluoride(out). Its activity is regulated as follows. Na(+) is not transported, but it plays an essential structural role and its presence is essential for fluoride channel function. Functionally, fluoride-specific ion channel. Important for reducing fluoride concentration in the cell, thus reducing its toxicity. The chain is Fluoride-specific ion channel FluC from Chromobacterium violaceum (strain ATCC 12472 / DSM 30191 / JCM 1249 / CCUG 213 / NBRC 12614 / NCIMB 9131 / NCTC 9757 / MK).